A 369-amino-acid polypeptide reads, in one-letter code: METLSQRLDACQNKILDCYEKDSKCIIDHIDYWKAVRHEYVLYYKARENDINVLNHQMVPSLQVCKAKACSAIELQIALEAISNTIYKNEEWTLRDTCDELWRTEPKNCFKKEGQHIEVWFDGNKNNCMEYVVWKFIYYNGECGWCKVSSGVDYRGIYYMHDGHKTYYTDFEQEAKKYGCTNIWEVHMETESIYCPDSVSSTCRYNVPPVETVNEYNNHRTTTTASTFVGAQDAAVSHRPGKRPRASESEPDSSRESYAHCVTTDTDISNNANSRSPRINTQSHCGDKTTPVIHLKGEANRLKCCRYRFQKYKTLFTDVTTTYHWTSTDNKDSSIITILYKDETQRDTFLNVVKIPPSVQVILGQMSCP.

The tract at residues 1–200 (METLSQRLDA…ESIYCPDSVS (200 aa)) is transactivation domain. Positions 230-257 (GAQDAAVSHRPGKRPRASESEPDSSRES) are disordered. Residues 245–257 (RASESEPDSSRES) are compositionally biased toward basic and acidic residues. The DNA-binding domain stretch occupies residues 289–369 (TTPVIHLKGE…QVILGQMSCP (81 aa)). Lys-296 participates in a covalent cross-link: Glycyl lysine isopeptide (Lys-Gly) (interchain with G-Cter in SUMO).

The protein belongs to the papillomaviridae E2 protein family. In terms of assembly, binds DNA as homodimer. Interacts with protein E1; this interaction greatly increases E1 DNA-binding activity. Interacts with protein L1; this interaction enhances E2-dependent replication and transcription activation. Interacts with protein L2; this interaction inhibits E2 transcriptional activity but not DNA replication function E2. Interacts with protein E7; this interaction inhibits E7 oncogenic activity. Interacts with host TAF1; this interaction modulates E2-dependent transcriptional regulation. Interacts with host BRD4; this interaction mediates E2 transcriptional activation function. Additionally, the interaction with host BRD4 on mitotic chromosomes mediates tethering of the viral genome. Interacts with host TOPBP1; this interaction is required for optimal viral DNA replication. In terms of processing, phosphorylated. Sumoylation plays a regulatory role in E2 transcriptional activity.

It is found in the host nucleus. Its function is as follows. Plays a role in the initiation of viral DNA replication. A dimer of E2 interacts with a dimer of E1 in order to improve specificity of E1 DNA binding activity. Once the complex recognizes and binds DNA at specific sites, the E2 dimer is removed from DNA. E2 also regulates viral transcription through binding to the E2RE response element (5'-ACCNNNNNNGGT-3') present in multiple copies in the regulatory regions of the viral genome. Activates or represses transcription depending on E2RE's position with regards to proximal promoter elements including the TATA-box. Repression occurs by sterically hindering the assembly of the transcription initiation complex. The polypeptide is Regulatory protein E2 (Homo sapiens (Human)).